We begin with the raw amino-acid sequence, 119 residues long: Protein TusC (119 aa).

Belongs to the DsrF/TusC family. Heterohexamer, formed by a dimer of trimers. The hexameric TusBCD complex contains 2 copies each of TusB, TusC and TusD. The TusBCD complex interacts with TusE.

The protein resides in the cytoplasm. Part of a sulfur-relay system required for 2-thiolation of 5-methylaminomethyl-2-thiouridine (mnm(5)s(2)U) at tRNA wobble positions. This is Protein TusC from Shigella boydii serotype 18 (strain CDC 3083-94 / BS512).